Reading from the N-terminus, the 584-residue chain is A-type ATP synthase subunit A (584 aa).

233–240 (GPFGSGKT) provides a ligand contact to ATP.

Belongs to the ATPase alpha/beta chains family. As to quaternary structure, has multiple subunits with at least A(3), B(3), C, D, E, F, H, I and proteolipid K(x).

Its subcellular location is the cell membrane. The enzyme catalyses ATP + H2O + 4 H(+)(in) = ADP + phosphate + 5 H(+)(out). Component of the A-type ATP synthase that produces ATP from ADP in the presence of a proton gradient across the membrane. The A chain is the catalytic subunit. The polypeptide is A-type ATP synthase subunit A (Methanothermobacter thermautotrophicus (strain ATCC 29096 / DSM 1053 / JCM 10044 / NBRC 100330 / Delta H) (Methanobacterium thermoautotrophicum)).